The primary structure comprises 209 residues: Ribosomal RNA large subunit methyltransferase E (209 aa).

S-adenosyl-L-methionine contacts are provided by Gly63, Trp65, Asp83, Asp99, and Asp124. The active-site Proton acceptor is Lys164.

This sequence belongs to the class I-like SAM-binding methyltransferase superfamily. RNA methyltransferase RlmE family.

It is found in the cytoplasm. It catalyses the reaction uridine(2552) in 23S rRNA + S-adenosyl-L-methionine = 2'-O-methyluridine(2552) in 23S rRNA + S-adenosyl-L-homocysteine + H(+). In terms of biological role, specifically methylates the uridine in position 2552 of 23S rRNA at the 2'-O position of the ribose in the fully assembled 50S ribosomal subunit. The polypeptide is Ribosomal RNA large subunit methyltransferase E (Photorhabdus laumondii subsp. laumondii (strain DSM 15139 / CIP 105565 / TT01) (Photorhabdus luminescens subsp. laumondii)).